The sequence spans 629 residues: Protein fem-1 homolog B (629 aa).

ANK repeat units follow at residues 47-77, 89-118, 122-151, 155-184, 188-217, and 220-250; these read QRST…DVQQ, DGAT…NVNH, TNST…NISI, YDNT…DPNA, CGAT…AMVV, and HGMT…DAKS. The stretch at 346–379 is one TPR repeat; the sequence is SHPIIYRGAVYADNMQFEQCIKLWLHALQLRQKG. ANK repeat units follow at residues 485–529 and 533–570; these read EGGS…NVNA and MGNS…HTDM.

The protein belongs to the fem-1 family. As to quaternary structure, component of a CRL2 E3 ubiquitin-protein ligase complex, also named ECS (Elongin BC-CUL2/5-SOCS-box protein) complex.

The protein localises to the cytoplasm. It localises to the nucleus. It participates in protein modification; protein ubiquitination. In terms of biological role, substrate-recognition component of a Cul2-RING (CRL2) E3 ubiquitin-protein ligase complex of the DesCEND (destruction via C-end degrons) pathway, which recognizes a C-degron located at the extreme C terminus of target proteins, leading to their ubiquitination and degradation. The C-degron recognized by the DesCEND pathway is usually a motif of less than ten residues and can be present in full-length proteins, truncated proteins or proteolytically cleaved forms. The CRL2(FEM1B) complex specifically recognizes proteins ending with -Gly-Leu-Asp-Arg, leading to their ubiquitination and degradation. The sequence is that of Protein fem-1 homolog B from Xenopus laevis (African clawed frog).